We begin with the raw amino-acid sequence, 163 residues long: MLTLTERLPQAAPADATLTLPFEVRQKSRFRATLDDGREVGVMLSRGEILRDGQCLQAGDGTVVRVHAAAEAVSTVRGDDGLALARACYHLGNRHVPLQIGAGFARYLHDHVLDDMLRGLGLEVVSEQAPFEPEPGAYGGGHGHTHSHDHSHQHDPAGHAHEH.

The disordered stretch occupies residues 130–163 (PFEPEPGAYGGGHGHTHSHDHSHQHDPAGHAHEH). Basic and acidic residues predominate over residues 146–163 (HSHDHSHQHDPAGHAHEH).

This sequence belongs to the UreE family.

Its subcellular location is the cytoplasm. In terms of biological role, involved in urease metallocenter assembly. Binds nickel. Probably functions as a nickel donor during metallocenter assembly. The protein is Urease accessory protein UreE of Alkalilimnicola ehrlichii (strain ATCC BAA-1101 / DSM 17681 / MLHE-1).